The following is a 762-amino-acid chain: 5-methyltetrahydropteroyltriglutamate--homocysteine methyltransferase (762 aa).

5-methyltetrahydropteroyltri-L-glutamate is bound by residues 18 to 21 (REWK) and K112. L-homocysteine is bound by residues 435 to 437 (IGS) and E488. L-methionine contacts are provided by residues 435–437 (IGS) and E488. 5-methyltetrahydropteroyltri-L-glutamate-binding positions include 519–520 (RC) and W565. D603 is an L-homocysteine binding site. D603 contributes to the L-methionine binding site. E609 is a binding site for 5-methyltetrahydropteroyltri-L-glutamate. The Zn(2+) site is built by H645, C647, and E669. Catalysis depends on H698, which acts as the Proton donor. C730 is a Zn(2+) binding site.

The protein belongs to the vitamin-B12 independent methionine synthase family. It depends on Zn(2+) as a cofactor.

The enzyme catalyses 5-methyltetrahydropteroyltri-L-glutamate + L-homocysteine = tetrahydropteroyltri-L-glutamate + L-methionine. The protein operates within amino-acid biosynthesis; L-methionine biosynthesis via de novo pathway; L-methionine from L-homocysteine (MetE route): step 1/1. Catalyzes the transfer of a methyl group from 5-methyltetrahydrofolate to homocysteine resulting in methionine formation. This chain is 5-methyltetrahydropteroyltriglutamate--homocysteine methyltransferase, found in Bacillus licheniformis (strain ATCC 14580 / DSM 13 / JCM 2505 / CCUG 7422 / NBRC 12200 / NCIMB 9375 / NCTC 10341 / NRRL NRS-1264 / Gibson 46).